Reading from the N-terminus, the 608-residue chain is Cytoplasmic dynein 1 intermediate chain 1 (608 aa).

Composition is skewed to basic and acidic residues over residues M1 to R13 and Q20 to E60. The interval M1–R106 is disordered. The residue at position 2 (S2) is an N-acetylserine. S50 carries the post-translational modification Phosphoserine. The span at P70 to M79 shows a compositional bias: pro residues. Positions S80–S90 are enriched in low complexity. S83 carries the post-translational modification Phosphoserine. T88 bears the Phosphothreonine mark. A phosphoserine mark is found at S90, S94, and S97. Residues K110 to V126 form an interaction with DYNLT1 region. The interval E132–K184 is disordered. Position 139 is a phosphothreonine (T139). 2 positions are modified to phosphoserine: S142 and S160. Positions E165–K184 are enriched in basic and acidic residues. 7 WD repeats span residues S248 to E297, H301 to V341, A350 to E391, S400 to G440, G445 to S490, D493 to T533, and E539 to N578. S598 is subject to Phosphoserine.

Belongs to the dynein intermediate chain family. As to quaternary structure, homodimer. The cytoplasmic dynein 1 complex consists of two catalytic heavy chains (HCs) and a number of non-catalytic subunits presented by intermediate chains (ICs), light intermediate chains (LICs) and light chains (LCs); the composition seems to vary in respect to the IC, LIC and LC composition. The heavy chain homodimer serves as a scaffold for the probable homodimeric assembly of the respective non-catalytic subunits. The ICs and LICs bind directly to the HC dimer and the LCs assemble on the IC dimer. Interacts with DYNC1H1. Interacts with DYNLT1 and DYNLT3. Interacts with DCTN1. Interacts with MCRS1; the interaction is required for the proper distribution of centriolar satellites.

The protein localises to the cytoplasm. Its subcellular location is the chromosome. It is found in the centromere. It localises to the kinetochore. The protein resides in the cytoskeleton. The protein localises to the spindle pole. Functionally, acts as one of several non-catalytic accessory components of the cytoplasmic dynein 1 complex that are thought to be involved in linking dynein to cargos and to adapter proteins that regulate dynein function. Cytoplasmic dynein 1 acts as a motor for the intracellular retrograde motility of vesicles and organelles along microtubules. The intermediate chains mediate the binding of dynein to dynactin via its 150 kDa component (p150-glued) DCTN1. May play a role in mediating the interaction of cytoplasmic dynein with membranous organelles and kinetochores. The chain is Cytoplasmic dynein 1 intermediate chain 1 (DYNC1I1) from Bos taurus (Bovine).